Consider the following 333-residue polypeptide: Phosphate acyltransferase (333 aa).

The protein belongs to the PlsX family. In terms of assembly, homodimer. Probably interacts with PlsY.

Its subcellular location is the cytoplasm. It catalyses the reaction a fatty acyl-[ACP] + phosphate = an acyl phosphate + holo-[ACP]. It functions in the pathway lipid metabolism; phospholipid metabolism. Its function is as follows. Catalyzes the reversible formation of acyl-phosphate (acyl-PO(4)) from acyl-[acyl-carrier-protein] (acyl-ACP). This enzyme utilizes acyl-ACP as fatty acyl donor, but not acyl-CoA. The chain is Phosphate acyltransferase from Helicobacter hepaticus (strain ATCC 51449 / 3B1).